A 590-amino-acid chain; its full sequence is Acetylcholinesterase (590 aa).

Positions 1 to 24 are cleaved as a signal peptide; the sequence is MREMNLLVTSSLGVLLHLVVLCQA. A glycan (N-linked (GlcNAc...) asparagine) is linked at N83. Cysteines 91 and 118 form a disulfide. The active-site Acyl-ester intermediate is the S224. An intrachain disulfide couples C278 to C289. E351 functions as the Charge relay system in the catalytic mechanism. C426 and C545 form a disulfide bridge. N440 is a glycosylation site (N-linked (GlcNAc...) asparagine). The active-site Charge relay system is the H464. Residues N481 and N557 are each glycosylated (N-linked (GlcNAc...) asparagine). Residue S567 is the site of GPI-anchor amidated serine attachment. Residues 568–590 constitute a propeptide, removed in mature form; the sequence is SGTSSSKGIIFYVLFSILYLIFY.

This sequence belongs to the type-B carboxylesterase/lipase family. As to quaternary structure, isoform H form is a homodimer; the asymmetric form is a disulfide-bonded oligomer composed of a collagenic subunit (Q) and a variable number of T catalytic subunits. Post-translationally, an interchain disulfide bond is present in what becomes position 596 of the T isoform. As to expression, found in the synapses and to a lower extent in extrajunctional areas of muscle and nerve, and on erythrocyte membranes.

It is found in the cell membrane. The protein resides in the synapse. It catalyses the reaction acetylcholine + H2O = choline + acetate + H(+). In terms of biological role, terminates signal transduction at the neuromuscular junction by rapid hydrolysis of the acetylcholine released into the synaptic cleft. May be involved in cell-cell interactions. This Torpedo marmorata (Marbled electric ray) protein is Acetylcholinesterase (ache).